The chain runs to 214 residues: Phosphatidylserine decarboxylase proenzyme (214 aa).

The active-site Schiff-base intermediate with substrate; via pyruvic acid is serine 182. Serine 182 bears the Pyruvic acid (Ser); by autocatalysis mark.

It belongs to the phosphatidylserine decarboxylase family. PSD-A subfamily. As to quaternary structure, heterodimer of a large membrane-associated beta subunit and a small pyruvoyl-containing alpha subunit. It depends on pyruvate as a cofactor. Post-translationally, is synthesized initially as an inactive proenzyme. Formation of the active enzyme involves a self-maturation process in which the active site pyruvoyl group is generated from an internal serine residue via an autocatalytic post-translational modification. Two non-identical subunits are generated from the proenzyme in this reaction, and the pyruvate is formed at the N-terminus of the alpha chain, which is derived from the carboxyl end of the proenzyme. The post-translation cleavage follows an unusual pathway, termed non-hydrolytic serinolysis, in which the side chain hydroxyl group of the serine supplies its oxygen atom to form the C-terminus of the beta chain, while the remainder of the serine residue undergoes an oxidative deamination to produce ammonia and the pyruvoyl prosthetic group on the alpha chain.

It localises to the cell membrane. It catalyses the reaction a 1,2-diacyl-sn-glycero-3-phospho-L-serine + H(+) = a 1,2-diacyl-sn-glycero-3-phosphoethanolamine + CO2. It functions in the pathway phospholipid metabolism; phosphatidylethanolamine biosynthesis; phosphatidylethanolamine from CDP-diacylglycerol: step 2/2. Its function is as follows. Catalyzes the formation of phosphatidylethanolamine (PtdEtn) from phosphatidylserine (PtdSer). This is Phosphatidylserine decarboxylase proenzyme from Burkholderia cenocepacia (strain HI2424).